We begin with the raw amino-acid sequence, 389 residues long: Pregnancy-associated glycoprotein 1 (389 aa).

The N-terminal stretch at 1–15 (MKWLVILGLVALSEC) is a signal peptide. The Peptidase A1 domain occupies 76–386 (YVGNITIGTP…DRGQNRIGLR (311 aa)). N-linked (GlcNAc...) asparagine glycosylation is present at Asn79. Asp94 is a catalytic residue. The cysteines at positions 107 and 112 are disulfide-linked. N-linked (GlcNAc...) asparagine glycosylation is present at Asn130. A disulfide bridge links Cys268 with Cys272. Asp277 is a catalytic residue. Cys311 and Cys345 are disulfide-bonded. A glycan (N-linked (GlcNAc...) asparagine) is linked at Asn348.

This sequence belongs to the peptidase A1 family. In terms of tissue distribution, expressed throughout the chorion, with the signal localized exclusively over the trophectoderm.

It is found in the secreted. The protein resides in the extracellular space. Functionally, appears to be proteolytically inactive. This Sus scrofa (Pig) protein is Pregnancy-associated glycoprotein 1.